The chain runs to 285 residues: Ribosomal RNA small subunit methyltransferase I (285 aa).

The protein belongs to the methyltransferase superfamily. RsmI family.

The protein localises to the cytoplasm. It carries out the reaction cytidine(1402) in 16S rRNA + S-adenosyl-L-methionine = 2'-O-methylcytidine(1402) in 16S rRNA + S-adenosyl-L-homocysteine + H(+). Its function is as follows. Catalyzes the 2'-O-methylation of the ribose of cytidine 1402 (C1402) in 16S rRNA. The polypeptide is Ribosomal RNA small subunit methyltransferase I (Mycobacterium tuberculosis (strain CDC 1551 / Oshkosh)).